A 339-amino-acid polypeptide reads, in one-letter code: Ketol-acid reductoisomerase (NADP(+)) (339 aa).

The KARI N-terminal Rossmann domain occupies 1-182; that stretch reads MRVYYDRDAD…GGGRSGIIET (182 aa). Residues 24-27, R48, S51, T53, and 83-86 each bind NADP(+); these read YGSQ and DEHQ. The active site involves H108. G134 provides a ligand contact to NADP(+). The KARI C-terminal knotted domain maps to 183–328; that stretch reads NFREECETDL…ARLRGMMPWI (146 aa). D191, E195, E227, and E231 together coordinate Mg(2+). S252 is a substrate binding site.

This sequence belongs to the ketol-acid reductoisomerase family. Mg(2+) is required as a cofactor.

It catalyses the reaction (2R)-2,3-dihydroxy-3-methylbutanoate + NADP(+) = (2S)-2-acetolactate + NADPH + H(+). It carries out the reaction (2R,3R)-2,3-dihydroxy-3-methylpentanoate + NADP(+) = (S)-2-ethyl-2-hydroxy-3-oxobutanoate + NADPH + H(+). It participates in amino-acid biosynthesis; L-isoleucine biosynthesis; L-isoleucine from 2-oxobutanoate: step 2/4. Its pathway is amino-acid biosynthesis; L-valine biosynthesis; L-valine from pyruvate: step 2/4. Involved in the biosynthesis of branched-chain amino acids (BCAA). Catalyzes an alkyl-migration followed by a ketol-acid reduction of (S)-2-acetolactate (S2AL) to yield (R)-2,3-dihydroxy-isovalerate. In the isomerase reaction, S2AL is rearranged via a Mg-dependent methyl migration to produce 3-hydroxy-3-methyl-2-ketobutyrate (HMKB). In the reductase reaction, this 2-ketoacid undergoes a metal-dependent reduction by NADPH to yield (R)-2,3-dihydroxy-isovalerate. The protein is Ketol-acid reductoisomerase (NADP(+)) of Caulobacter sp. (strain K31).